The primary structure comprises 314 residues: MSTDIDNDVRTRWNVTALSAGHQIAMHSALLDMDLLLCGETGTGKDTLASRIHELSSRTGPFVGMNCAAIPESLAESQLFGVVNGAFTGVCRAREGYIEPSNGGTLYLDEIDTMPLSLQAKLLRVLESRGVERLGSTDFIPLDLQVIASASAPLDELVEQGLFRRDLFFRLNVLTLQLPALRKRREQILPLFDQFTQDIAAECGRSAPTLDNGRVQILLSHDWPGNVRELKSAANAICPRIAVAGRRAVEARDPVTGLRMQMRVIEKMLIQDALKRHRHNFDAVLEELELPRRTLYHRMKELGVASHIDLAAES.

Residues 11-239 (TRWNVTALSA…LKSAANAICP (229 aa)) enclose the Sigma-54 factor interaction domain. ATP-binding positions include 39-46 (GETGTGKD) and 101-110 (SNGGTLYLDE). The H-T-H motif DNA-binding region spans 281 to 300 (FDAVLEELELPRRTLYHRMK).

Functionally, member of the two-component regulatory system HrpR/HrpS that regulates the activation of the sigma factor hrpL which itself induces the expression of hprD as well as other hrp loci which are involved in plant pathogenicity, hrmA and avr genes. Probably interacts with sigma-54. This chain is Pathogenicity locus probable regulatory protein HrpR (hrpR), found in Pseudomonas syringae pv. syringae.